A 521-amino-acid chain; its full sequence is Bifunctional purine biosynthesis protein PurH (521 aa).

The 145-residue stretch at 1 to 145 (MIKQALISVS…KNHRDVTVVV (145 aa)) folds into the MGS-like domain.

The protein belongs to the PurH family.

The catalysed reaction is (6R)-10-formyltetrahydrofolate + 5-amino-1-(5-phospho-beta-D-ribosyl)imidazole-4-carboxamide = 5-formamido-1-(5-phospho-D-ribosyl)imidazole-4-carboxamide + (6S)-5,6,7,8-tetrahydrofolate. It catalyses the reaction IMP + H2O = 5-formamido-1-(5-phospho-D-ribosyl)imidazole-4-carboxamide. Its pathway is purine metabolism; IMP biosynthesis via de novo pathway; 5-formamido-1-(5-phospho-D-ribosyl)imidazole-4-carboxamide from 5-amino-1-(5-phospho-D-ribosyl)imidazole-4-carboxamide (10-formyl THF route): step 1/1. It participates in purine metabolism; IMP biosynthesis via de novo pathway; IMP from 5-formamido-1-(5-phospho-D-ribosyl)imidazole-4-carboxamide: step 1/1. The protein is Bifunctional purine biosynthesis protein PurH of Burkholderia orbicola (strain MC0-3).